Consider the following 157-residue polypeptide: Transcriptional repressor NrdR (157 aa).

A zinc finger lies at C3 to C34. One can recognise an ATP-cone domain in the interval L49–D139.

It belongs to the NrdR family. The cofactor is Zn(2+).

In terms of biological role, negatively regulates transcription of bacterial ribonucleotide reductase nrd genes and operons by binding to NrdR-boxes. This chain is Transcriptional repressor NrdR, found in Granulibacter bethesdensis (strain ATCC BAA-1260 / CGDNIH1).